The following is a 229-amino-acid chain: Orotidine 5'-phosphate decarboxylase (229 aa).

Residues D10, K32, 59 to 68 (DLKFHDIPNT), T119, R180, Q189, G209, and R210 contribute to the substrate site. The Proton donor role is filled by K61.

This sequence belongs to the OMP decarboxylase family. Type 1 subfamily. In terms of assembly, homodimer.

The enzyme catalyses orotidine 5'-phosphate + H(+) = UMP + CO2. The protein operates within pyrimidine metabolism; UMP biosynthesis via de novo pathway; UMP from orotate: step 2/2. Catalyzes the decarboxylation of orotidine 5'-monophosphate (OMP) to uridine 5'-monophosphate (UMP). In Legionella pneumophila (strain Corby), this protein is Orotidine 5'-phosphate decarboxylase.